The sequence spans 84 residues: Small ribosomal subunit protein uS17 (84 aa).

Belongs to the universal ribosomal protein uS17 family. In terms of assembly, part of the 30S ribosomal subunit.

Functionally, one of the primary rRNA binding proteins, it binds specifically to the 5'-end of 16S ribosomal RNA. This chain is Small ribosomal subunit protein uS17, found in Ureaplasma parvum serovar 3 (strain ATCC 27815 / 27 / NCTC 11736).